Here is a 95-residue protein sequence, read N- to C-terminus: uncharacterized protein (95 aa).

This is an uncharacterized protein from Escherichia coli (strain K12).